The following is a 311-amino-acid chain: L-lactate dehydrogenase (311 aa).

NAD(+) is bound by residues valine 12, aspartate 33, lysine 38, tyrosine 63, and 77–78 (GA). Substrate contacts are provided by residues glutamine 80, arginine 86, and 118-121 (NPVD). Residues 116 to 118 (VTN) and serine 141 contribute to the NAD(+) site. Substrate is bound at residue 146 to 149 (DSAR). Beta-D-fructose 1,6-bisphosphate contacts are provided by arginine 151 and histidine 166. Histidine 173 acts as the Proton acceptor in catalysis. Tyrosine 219 carries the post-translational modification Phosphotyrosine. Position 228 (threonine 228) interacts with substrate.

Belongs to the LDH/MDH superfamily. LDH family. In terms of assembly, homotetramer.

It is found in the cytoplasm. The enzyme catalyses (S)-lactate + NAD(+) = pyruvate + NADH + H(+). It functions in the pathway fermentation; pyruvate fermentation to lactate; (S)-lactate from pyruvate: step 1/1. Allosterically activated by fructose 1,6-bisphosphate (FBP). In terms of biological role, catalyzes the conversion of lactate to pyruvate. The polypeptide is L-lactate dehydrogenase (Thermoanaerobacter pseudethanolicus (strain ATCC 33223 / 39E) (Clostridium thermohydrosulfuricum)).